The chain runs to 201 residues: Adenylyl-sulfate kinase (201 aa).

A disordered region spans residues 1 to 23; the sequence is MALHDENVVWHSHPVTPQQREQH. Residue 35–42 coordinates ATP; it reads GLSGSGKS. The active-site Phosphoserine intermediate is serine 109.

This sequence belongs to the APS kinase family.

The catalysed reaction is adenosine 5'-phosphosulfate + ATP = 3'-phosphoadenylyl sulfate + ADP + H(+). The protein operates within sulfur metabolism; hydrogen sulfide biosynthesis; sulfite from sulfate: step 2/3. Catalyzes the synthesis of activated sulfate. This is Adenylyl-sulfate kinase from Escherichia coli O127:H6 (strain E2348/69 / EPEC).